Reading from the N-terminus, the 506-residue chain is UPF0522 protein A (506 aa).

A signal peptide spans 1 to 18 (MIKSLLLLISIIIGIVIS). Asn-145, Asn-155, Asn-330, Asn-366, Asn-418, and Asn-427 each carry an N-linked (GlcNAc...) asparagine glycan.

Belongs to the UPF0522 family.

The protein localises to the secreted. This Dictyostelium discoideum (Social amoeba) protein is UPF0522 protein A.